The following is a 339-amino-acid chain: MEELLKELSKRAEEEILKAKSLQEIESLRVKYLGKKGELTQILRGMGSLSPEERPVIGQLANDVREKIENMILERREKIAKEEKERKIKEEYIDITMPGKPYKYGHKHPITLVMDEIKRIFLGLGFSIAEGPEVELAYYNFEALNTPEDHPARDLQDTFYITSDILLRTQTSPVQVRTMEKTKPPIRVISPGRVYRSDDIDATHSPVFHQMEGLVVDEGITMGDLKGVLNVFAKKFFGEQTKTKFRPHFFPFTEPSAEMDVSCFACGGKGCRVCGYTGWIEILGAGMVHPNVLRMSGIDPEKYTGFAFGLGIDRIAMLKYGIEDLRLLFENDMRFIEQF.

Position 254 (Glu254) interacts with Mg(2+).

It belongs to the class-II aminoacyl-tRNA synthetase family. Phe-tRNA synthetase alpha subunit type 1 subfamily. As to quaternary structure, tetramer of two alpha and two beta subunits. Mg(2+) serves as cofactor.

Its subcellular location is the cytoplasm. The catalysed reaction is tRNA(Phe) + L-phenylalanine + ATP = L-phenylalanyl-tRNA(Phe) + AMP + diphosphate + H(+). The sequence is that of Phenylalanine--tRNA ligase alpha subunit from Caldanaerobacter subterraneus subsp. tengcongensis (strain DSM 15242 / JCM 11007 / NBRC 100824 / MB4) (Thermoanaerobacter tengcongensis).